Here is a 199-residue protein sequence, read N- to C-terminus: Pneumococcal vaccine antigen A homolog (199 aa).

The protein localises to the cell surface. This Streptococcus pyogenes serotype M6 (strain ATCC BAA-946 / MGAS10394) protein is Pneumococcal vaccine antigen A homolog (pvaA).